Here is a 96-residue protein sequence, read N- to C-terminus: NADH-ubiquinone oxidoreductase chain 4L (96 aa).

3 helical membrane passes run 2-22 (IMILYWSLPMILFILGLFCFV), 28-48 (LLSMLLSLEFIVLMLFFMLFI), and 62-82 (MFLTFSVCEGALGLSILVSMI).

The protein belongs to the complex I subunit 4L family.

The protein localises to the mitochondrion membrane. It catalyses the reaction a ubiquinone + NADH + 5 H(+)(in) = a ubiquinol + NAD(+) + 4 H(+)(out). Functionally, core subunit of the mitochondrial membrane respiratory chain NADH dehydrogenase (Complex I) that is believed to belong to the minimal assembly required for catalysis. Complex I functions in the transfer of electrons from NADH to the respiratory chain. The immediate electron acceptor for the enzyme is believed to be ubiquinone. The chain is NADH-ubiquinone oxidoreductase chain 4L (mt:ND4L) from Drosophila melanogaster (Fruit fly).